The sequence spans 952 residues: UPF0182 protein SRU_2225 (952 aa).

The next 7 membrane-spanning stretches (helical) occupy residues Ile-12 to Val-32, Ala-52 to Phe-72, Leu-109 to Trp-129, Ala-168 to Gly-188, Leu-207 to Tyr-227, Val-247 to Gly-267, and Leu-277 to Pro-297. The interval Val-917 to Ser-952 is disordered. Residues Ser-931–Ala-940 are compositionally biased toward polar residues.

Belongs to the UPF0182 family.

The protein resides in the cell membrane. In Salinibacter ruber (strain DSM 13855 / M31), this protein is UPF0182 protein SRU_2225.